Here is a 275-residue protein sequence, read N- to C-terminus: Large ribosomal subunit protein uL2 (275 aa).

The interval 223-275 (VAMNPIDHPHGGGEGRTSGGRHPVSPWGVPTKGYKTRSNKRTDKYIVRRRNKK) is disordered.

It belongs to the universal ribosomal protein uL2 family. As to quaternary structure, part of the 50S ribosomal subunit. Forms a bridge to the 30S subunit in the 70S ribosome.

Its function is as follows. One of the primary rRNA binding proteins. Required for association of the 30S and 50S subunits to form the 70S ribosome, for tRNA binding and peptide bond formation. It has been suggested to have peptidyltransferase activity; this is somewhat controversial. Makes several contacts with the 16S rRNA in the 70S ribosome. This chain is Large ribosomal subunit protein uL2, found in Shewanella woodyi (strain ATCC 51908 / MS32).